The primary structure comprises 357 residues: Probable dual-specificity RNA methyltransferase RlmN (357 aa).

The active-site Proton acceptor is E95. Residues 106 to 340 (NRDRHTVCVS…VSVREEKGTD (235 aa)) form the Radical SAM core domain. A disulfide bridge links C113 with C345. Residues C120, C124, and C127 each coordinate [4Fe-4S] cluster. Residues 172 to 173 (GE), S204, 227 to 229 (SLH), and N302 each bind S-adenosyl-L-methionine. C345 acts as the S-methylcysteine intermediate in catalysis.

This sequence belongs to the radical SAM superfamily. RlmN family. [4Fe-4S] cluster is required as a cofactor.

The protein localises to the cytoplasm. The catalysed reaction is adenosine(2503) in 23S rRNA + 2 reduced [2Fe-2S]-[ferredoxin] + 2 S-adenosyl-L-methionine = 2-methyladenosine(2503) in 23S rRNA + 5'-deoxyadenosine + L-methionine + 2 oxidized [2Fe-2S]-[ferredoxin] + S-adenosyl-L-homocysteine. The enzyme catalyses adenosine(37) in tRNA + 2 reduced [2Fe-2S]-[ferredoxin] + 2 S-adenosyl-L-methionine = 2-methyladenosine(37) in tRNA + 5'-deoxyadenosine + L-methionine + 2 oxidized [2Fe-2S]-[ferredoxin] + S-adenosyl-L-homocysteine. Its function is as follows. Specifically methylates position 2 of adenine 2503 in 23S rRNA and position 2 of adenine 37 in tRNAs. In Desulfitobacterium hafniense (strain DSM 10664 / DCB-2), this protein is Probable dual-specificity RNA methyltransferase RlmN.